A 540-amino-acid chain; its full sequence is Glucose-6-phosphate isomerase (540 aa).

Residue Glu-350 is the Proton donor of the active site. Residues His-381 and Lys-503 contribute to the active site.

It belongs to the GPI family.

It is found in the cytoplasm. The enzyme catalyses alpha-D-glucose 6-phosphate = beta-D-fructose 6-phosphate. Its pathway is carbohydrate biosynthesis; gluconeogenesis. It participates in carbohydrate degradation; glycolysis; D-glyceraldehyde 3-phosphate and glycerone phosphate from D-glucose: step 2/4. Its function is as follows. Catalyzes the reversible isomerization of glucose-6-phosphate to fructose-6-phosphate. In Paraburkholderia xenovorans (strain LB400), this protein is Glucose-6-phosphate isomerase.